A 429-amino-acid chain; its full sequence is ATP-dependent RNA helicase RhlB (429 aa).

The short motif at 9–37 is the Q motif element; sequence EKFAQMGLEPEVLAGLESKGFHYCTPIQA. Residues 40–219 enclose the Helicase ATP-binding domain; it reads LPLLVEGHDL…YEHMNHPEHV (180 aa). 53–60 is a binding site for ATP; that stretch reads AQTGTGKT. The DEAD box motif lies at 165–168; sequence DEAD. Positions 243-390 constitute a Helicase C-terminal domain; sequence KMLLLLSLME…VSKYDREALL (148 aa). Residues 395 to 429 are disordered; that stretch reads APKRVVRNRQPVNRNMRDRQGGGNSNNRRRPPRKS.

The protein belongs to the DEAD box helicase family. RhlB subfamily. In terms of assembly, component of the RNA degradosome, which is a multiprotein complex involved in RNA processing and mRNA degradation.

It localises to the cytoplasm. It catalyses the reaction ATP + H2O = ADP + phosphate + H(+). In terms of biological role, DEAD-box RNA helicase involved in RNA degradation. Has RNA-dependent ATPase activity and unwinds double-stranded RNA. The protein is ATP-dependent RNA helicase RhlB of Aeromonas salmonicida (strain A449).